Here is a 308-residue protein sequence, read N- to C-terminus: Acyltransferase drtE (308 aa).

In terms of domain architecture, AB hydrolase-1 spans 35–159 (PALVMNPGYN…AAEAKDNFSR (125 aa)).

The protein belongs to the polyketide transferase af380 family.

It functions in the pathway secondary metabolite biosynthesis; terpenoid biosynthesis. In terms of biological role, acyltransferase; part of the gene cluster that mediates the biosynthesis of various drimane-type sesquiterpene esters, compounds that exhibit diverse biological activities and are widely present in eukaryotes. The pathway begins with the synthesis of the backbone drimenol by the terpene cyclase drtB using farnesyl pyrophosphate (FPP) as substrate. The cytochrome P450 monooxygenase drtD is then responsible for the hydroxylations at C-6, C-9 and C-12, as well as the oxidation of hydroxyl groups at C-6 and C-11 to a ketone and an aldehyde, respectively. Then, the biosynthesis can go in two directions, either the hydroxylated drimenol is further hydroxylated at C-2 and C-3 by an enzyme(s) not associated with the drt cluster, or the FAD-binding oxidoreductase drtC further oxidizes C-11 or C-12 to form the butyrolactone ring. DrtB, drtD and drtC are solely responsible for the formation of the different drimane structures observed during drimane sesquiterpenes biosynthesis. The polyketide synthase drtA synthesizes different lengths (C6 and C8) of PKS chains, which are then oxidized to varying degrees by the short-chain dehydrogenase drtF. Finally, these PKS chains are transferred onto drimane sesquiterpenes by the acyltransferase drtE, forming the sesquiterpene esters. In addition to the different fatty acyl-CoA chains produced by drtA, drtE is also able to use cinnamoyl-CoA as a substrate. In Aspergillus calidoustus, this protein is Acyltransferase drtE.